The primary structure comprises 425 residues: Tumor necrosis factor receptor superfamily member 16 (425 aa).

An N-terminal signal peptide occupies residues 1–29; it reads MRRAGAACSAMDRLRLLLLLILGVSSGGA. Topologically, residues 30-253 are extracellular; the sequence is KETCSTGLYT…VTRGTTDNLI (224 aa). TNFR-Cys repeat units follow at residues 32–65, 67–108, 109–147, and 149–189; these read TCSTGLYTHSGECCKACNLGEGVAQPCGANQTVC, PCLD…DAVC, RCAYGYYQDEETGHCEACSVCEVGSGLVFSCQDKQNTVC, and ECPE…DAEC. Disulfide bonds link Cys33-Cys44, Cys45-Cys58, Cys48-Cys65, Cys68-Cys84, Cys87-Cys100, Cys90-Cys108, Cys110-Cys123, Cys126-Cys139, Cys129-Cys147, Cys150-Cys165, Cys168-Cys181, and Cys171-Cys189. 2 N-linked (GlcNAc...) asparagine glycosylation sites follow: Asn61 and Asn71. The disordered stretch occupies residues 193-225; sequence PGRWIPRSTPPEGSDSTAPSTQEPEVPPEQDLV. Residues 206–215 are compositionally biased toward polar residues; that stretch reads SDSTAPSTQE. The helical transmembrane segment at 254 to 274 threads the bilayer; that stretch reads PVYCSILAAVVVGLVAYIAFK. Topologically, residues 275-425 are cytoplasmic; it reads RWNSCKQNKQ…CSESTATSPV (151 aa). Composition is skewed to polar residues over residues 282 to 292 and 306 to 327; these read NKQGANSRPVN and SGISVDSQSLHDQQTHTQTASG. The interval 282-332 is disordered; that stretch reads NKQGANSRPVNQTPPPEGEKLHSDSGISVDSQSLHDQQTHTQTASGQALKG. A Phosphoserine modification is found at Ser312. The segment at 327-342 is mediates interaction with KIDINS220; that stretch reads GQALKGDGNLYSSLPL. A Death domain is found at 354-419; that stretch reads GDTWRHLAGE…DIVESLCSES (66 aa).

In terms of assembly, homodimer; disulfide-linked. Heterodimer with SORCS2. The extracellular domains of the heterodimer bind NGF. The cytoplasmic region of the heterodimer binds TRIO. NGF binding mediates dissociation of TRIO from the receptor complex. Interacts with RTN4R. Interacts with TRAF2, TRAF4 and TRAF6. Interacts with PTPN13 and RANBP9. Interacts through TRAF6 with SQSTM1 which bridges NGFR to NTRK1. Interacts with BEX1. Interacts with BEX3. Interacts with KIDINS220 and NTRK1. Can form a ternary complex with NTRK1 and KIDINS220 and this complex is affected by the expression levels of KIDINS220. An increase in KIDINS220 expression leads to a decreased association of NGFR and NTRK1. Interacts (via death domain) with RAB31. Interacts with NTRK2; may regulate the ligand specificity of the NTRK2 receptor. Interacts with LINGO1. Interacts with NRADD. Interacts with MAGED1; the interaction antagonizes the association NGFR:NTRK1. Interacts (via death domain) with ARHGDIA and RIPK2. Interacts with BFAR. In terms of processing, subject to intramembrane proteolytic cleavage by the gamma-secretase complex, giving rise to an intracellular fragment that is rapidly degraded via the proteasome. Post-translationally, N- and O-glycosylated. Phosphorylated on serine residues.

It is found in the cell membrane. The protein resides in the cytoplasm. It localises to the perikaryon. The protein localises to the cell projection. Its subcellular location is the growth cone. It is found in the dendritic spine. In terms of biological role, low affinity receptor which can bind to NGF, BDNF, NTF3, and NTF4. Forms a heterodimeric receptor with SORCS2 that binds the precursor forms of NGF, BDNF and NTF3 with high affinity, and has much lower affinity for mature NGF and BDNF. In response to proNGF binding, the heterodimeric receptor with SORCS2 activates a signaling cascade that leads to decreased Rac activity, reorganization of the actin cytoskeleton and neuronal growth cone collapse. Plays an important role in differentiation and survival of specific neuronal populations during development. Can mediate cell survival as well as cell death of neural cells. Plays a role in the inactivation of RHOA. Plays a role in the regulation of the translocation of GLUT4 to the cell surface in adipocytes and skeletal muscle cells in response to insulin, probably by regulating RAB31 activity, and thereby contributes to the regulation of insulin-dependent glucose uptake. Necessary for the circadian oscillation of the clock genes BMAL1, PER1, PER2 and NR1D1 in the suprachiasmatic nucleus (SCN) of the brain and in liver and of the genes involved in glucose and lipid metabolism in the liver. The sequence is that of Tumor necrosis factor receptor superfamily member 16 (Ngfr) from Rattus norvegicus (Rat).